A 411-amino-acid chain; its full sequence is 2,3-bisphosphoglycerate-independent phosphoglycerate mutase (411 aa).

Belongs to the BPG-independent phosphoglycerate mutase family. A-PGAM subfamily.

The enzyme catalyses (2R)-2-phosphoglycerate = (2R)-3-phosphoglycerate. It functions in the pathway carbohydrate degradation; glycolysis; pyruvate from D-glyceraldehyde 3-phosphate: step 3/5. In terms of biological role, catalyzes the interconversion of 2-phosphoglycerate and 3-phosphoglycerate. The chain is 2,3-bisphosphoglycerate-independent phosphoglycerate mutase from Thermococcus gammatolerans (strain DSM 15229 / JCM 11827 / EJ3).